A 150-amino-acid polypeptide reads, in one-letter code: Troponin C, isotype gamma (150 aa).

At Met-1 the chain carries N-acetylmethionine. 4 consecutive EF-hand domains span residues 7–42 (EQLS…MGVK), 43–78 (ISEK…FLIE), 83–118 (ALKA…LDNR), and 119–150 (LTED…MMSG). 5 residues coordinate Ca(2+): Asp-56, Asp-58, Ser-60, Glu-62, and Glu-67. Asp-132, Asp-134, Ser-136, Thr-138, and Glu-143 together coordinate Ca(2+).

This sequence belongs to the troponin C family.

Functionally, troponin is the central regulatory protein of striated muscle contraction. Tn consists of three components: Tn-I which is the inhibitor of actomyosin ATPase, Tn-T which contains the binding site for tropomyosin and Tn-C. The binding of calcium to Tn-C abolishes the inhibitory action of Tn on actin filaments. The polypeptide is Troponin C, isotype gamma (Astacus leptodactylus (Turkish narrow-clawed crayfish)).